We begin with the raw amino-acid sequence, 535 residues long: CTP synthase (535 aa).

Residues 1–266 (MKFVVITGGV…GDYICERLGL (266 aa)) are amidoligase domain. Serine 12 serves as a coordination point for CTP. Serine 12 provides a ligand contact to UTP. ATP-binding positions include 13-18 (GIGKGI) and aspartate 70. Mg(2+)-binding residues include aspartate 70 and glutamate 140. Residues 147-149 (DIE), 187-192 (KTKPTQ), and lysine 223 contribute to the CTP site. UTP-binding positions include 187–192 (KTKPTQ) and lysine 223. The Glutamine amidotransferase type-1 domain occupies 291–535 (RIAVVGKYVD…IKAAAGQGPD (245 aa)). Glycine 355 lines the L-glutamine pocket. The Nucleophile; for glutamine hydrolysis role is filled by cysteine 382. Residues 383–386 (LGFQ), glutamate 406, and arginine 464 contribute to the L-glutamine site. Active-site residues include histidine 508 and glutamate 510.

The protein belongs to the CTP synthase family. In terms of assembly, homotetramer.

It catalyses the reaction UTP + L-glutamine + ATP + H2O = CTP + L-glutamate + ADP + phosphate + 2 H(+). The catalysed reaction is L-glutamine + H2O = L-glutamate + NH4(+). The enzyme catalyses UTP + NH4(+) + ATP = CTP + ADP + phosphate + 2 H(+). It functions in the pathway pyrimidine metabolism; CTP biosynthesis via de novo pathway; CTP from UDP: step 2/2. With respect to regulation, allosterically activated by GTP, when glutamine is the substrate; GTP has no effect on the reaction when ammonia is the substrate. The allosteric effector GTP functions by stabilizing the protein conformation that binds the tetrahedral intermediate(s) formed during glutamine hydrolysis. Inhibited by the product CTP, via allosteric rather than competitive inhibition. Functionally, catalyzes the ATP-dependent amination of UTP to CTP with either L-glutamine or ammonia as the source of nitrogen. Regulates intracellular CTP levels through interactions with the four ribonucleotide triphosphates. The sequence is that of CTP synthase from Methanopyrus kandleri (strain AV19 / DSM 6324 / JCM 9639 / NBRC 100938).